Consider the following 183-residue polypeptide: dCTP deaminase (183 aa).

Residues 106–111 (KSTYAR), 130–132 (TLE), Q151, Y165, and Q175 contribute to the dCTP site. The active-site Proton donor/acceptor is E132.

The protein belongs to the dCTP deaminase family. Homotrimer.

It catalyses the reaction dCTP + H2O + H(+) = dUTP + NH4(+). It functions in the pathway pyrimidine metabolism; dUMP biosynthesis; dUMP from dCTP (dUTP route): step 1/2. Functionally, catalyzes the deamination of dCTP to dUTP. This Acidobacterium capsulatum (strain ATCC 51196 / DSM 11244 / BCRC 80197 / JCM 7670 / NBRC 15755 / NCIMB 13165 / 161) protein is dCTP deaminase.